The primary structure comprises 153 residues: Fucose mutarotase (153 aa).

Residue His24 is the Proton donor of the active site. Asp32 contributes to the substrate binding site. The active site involves Asp69. Residues Met78, Tyr119, Tyr137, and Asn139 each coordinate substrate. Tyr119 is a catalytic residue.

Belongs to the RbsD / FucU family.

The enzyme catalyses alpha-L-fucose = beta-L-fucose. Functionally, involved in the interconversion between alpha- and beta-L-fucoses. The sequence is that of Fucose mutarotase (fuom) from Danio rerio (Zebrafish).